A 106-amino-acid polypeptide reads, in one-letter code: YcgL domain-containing protein PsycPRwf_1721 (106 aa).

The 94-residue stretch at 1–94 (MHCDIYKFPK…PSDVLLAQAQ (94 aa)) folds into the YcgL domain.

The polypeptide is YcgL domain-containing protein PsycPRwf_1721 (Psychrobacter sp. (strain PRwf-1)).